The sequence spans 171 residues: Peptide deformylase (171 aa).

Fe cation is bound by residues C92 and H134. E135 is a catalytic residue. H138 provides a ligand contact to Fe cation.

The protein belongs to the polypeptide deformylase family. Fe(2+) serves as cofactor.

The enzyme catalyses N-terminal N-formyl-L-methionyl-[peptide] + H2O = N-terminal L-methionyl-[peptide] + formate. Removes the formyl group from the N-terminal Met of newly synthesized proteins. Requires at least a dipeptide for an efficient rate of reaction. N-terminal L-methionine is a prerequisite for activity but the enzyme has broad specificity at other positions. This Polynucleobacter necessarius subsp. necessarius (strain STIR1) protein is Peptide deformylase.